The following is a 475-amino-acid chain: MASQSSVAVISSAAARGESFPDSKKPIGSVRFQQPLRLSFSYCKSGNMSSRICAMAKPNDAETLSSSVDMSLSPRVQSLKPSKTMVITDLAATLVQSGVPVIRLAAGEPDFDTPKVVAEAGINAIREGFTRYTLNAGITELREAICRKLKEENGLSYAPDQILVSNGAKQSLLQAVLAVCSPGDEVIIPAPYWVSYTEQARLADATPVVIPTKISNNFLLDPKDLESKLTEKSRLLILCSPSNPTGSVYPKSLLEEIARIIAKHPRLLVLSDEIYEHIIYAPATHTSFASLPDMYERTLTVNGFSKAFAMTGWRLGYLAGPKHIVAACSKLQGQVSSGASSIAQKAGVAALGLGKAGGETVAEMVKAYRERRDFLVKSLGDIKGVKISEPQGAFYLFIDFSAYYGSEAEGFGLINDSSSLALYFLDKFQVAMVPGDAFGDDSCIRISYATSLDVLQAAVEKIRKALEPLRATVSV.

A chloroplast-targeting transit peptide spans M1–M55. L-aspartate contacts are provided by G107, W193, and N243. The residue at position 306 (K306) is an N6-(pyridoxal phosphate)lysine. R445 contacts L-aspartate.

Belongs to the class-I pyridoxal-phosphate-dependent aminotransferase family. As to quaternary structure, homodimer. The cofactor is pyridoxal 5'-phosphate.

The protein resides in the plastid. It localises to the chloroplast. It catalyses the reaction L-aspartate + 2-oxoglutarate = oxaloacetate + L-glutamate. It carries out the reaction L-arogenate + oxaloacetate = prephenate + L-aspartate. The enzyme catalyses L-arogenate + 2-oxoglutarate = prephenate + L-glutamate. Its pathway is amino-acid biosynthesis; L-phenylalanine biosynthesis; L-arogenate from prephenate (L-Asp route): step 1/1. It participates in amino-acid biosynthesis; L-phenylalanine biosynthesis; L-arogenate from prephenate (L-Glu route): step 1/1. In terms of biological role, prokaryotic-type aspartate aminotransferase. Also has a prenate transaminase activity. Involved in the aromatic amino acids biosynthesis pathway via the arogenate route. Required for the transamination of prephenate into arogenate. Required for early development of the embryo. This chain is Bifunctional aspartate aminotransferase and glutamate/aspartate-prephenate aminotransferase (PAT), found in Arabidopsis thaliana (Mouse-ear cress).